The sequence spans 433 residues: Histidine--tRNA ligase (433 aa).

The protein belongs to the class-II aminoacyl-tRNA synthetase family. In terms of assembly, homodimer.

It localises to the cytoplasm. The catalysed reaction is tRNA(His) + L-histidine + ATP = L-histidyl-tRNA(His) + AMP + diphosphate + H(+). This chain is Histidine--tRNA ligase, found in Pseudothermotoga lettingae (strain ATCC BAA-301 / DSM 14385 / NBRC 107922 / TMO) (Thermotoga lettingae).